The primary structure comprises 270 residues: Tryptophan synthase alpha chain (270 aa).

Residues glutamate 57 and aspartate 68 each act as proton acceptor in the active site.

The protein belongs to the TrpA family. In terms of assembly, tetramer of two alpha and two beta chains.

It catalyses the reaction (1S,2R)-1-C-(indol-3-yl)glycerol 3-phosphate + L-serine = D-glyceraldehyde 3-phosphate + L-tryptophan + H2O. It functions in the pathway amino-acid biosynthesis; L-tryptophan biosynthesis; L-tryptophan from chorismate: step 5/5. In terms of biological role, the alpha subunit is responsible for the aldol cleavage of indoleglycerol phosphate to indole and glyceraldehyde 3-phosphate. In Mycobacterium bovis (strain ATCC BAA-935 / AF2122/97), this protein is Tryptophan synthase alpha chain.